The sequence spans 629 residues: Dual specificity tyrosine-phosphorylation-regulated kinase 1B (629 aa).

Tyrosine 63 is subject to Phosphotyrosine. Residues 67 to 86 (KKRRAQQAPPQDSSTKKEKK) form a disordered region. A Bipartite nuclear localization signal motif is present at residues 69–86 (RRAQQAPPQDSSTKKEKK). Tyrosine 92 and tyrosine 111 each carry phosphotyrosine. Residues 111–431 (YEIDSLIGKG…PLGALQHGFF (321 aa)) enclose the Protein kinase domain. 117–125 (IGKGSFGQV) serves as a coordination point for ATP. A Phosphotyrosine modification is found at tyrosine 129. Position 140 (lysine 140) interacts with ATP. At tyrosine 171 the chain carries Phosphotyrosine. Residue 190-193 (FELL) coordinates ATP. Aspartate 239 acts as the Proton acceptor in catalysis. Serine 262 is subject to Phosphoserine. Tyrosine 271 is modified (phosphotyrosine; by autocatalysis). Tyrosine 273 is modified (phosphotyrosine). Residues 380–399 (GVQTGGPGGRRAGEPGHSPA) are disordered. Position 401 is a phosphotyrosine (tyrosine 401). 2 disordered regions span residues 436–480 (DEAT…SNDN) and 496–629 (PITD…AASS). The span at 438-477 (ATNTGPAGSSASTSPAPLDTCPSSSTASSISSSGGSSGSS) shows a compositional bias: low complexity. Residues 480-520 (NRAYRYSNRYCGGPGPPITDCEMNSPQVLPSQPLRPWAGGD) form an interaction with RANBP9 region. Composition is skewed to pro residues over residues 552–562 (PPSPTSPPPPE) and 574–585 (DCSPPPPAPAPQ). Serine 624 is subject to Phosphoserine.

It belongs to the protein kinase superfamily. CMGC Ser/Thr protein kinase family. MNB/DYRK subfamily. Dimer. Interacts with DCOHM, MAP2K3/MKK3, RANBP9 and TCF1/HNF1A. Part of a complex consisting of RANBP9, RAN, DYRK1B and COPS5. Interacts with DCAF7. Interacts with RNF169. In terms of processing, phosphorylated by MAP kinase. Tyrosine phosphorylation may be required for dimerization. In terms of tissue distribution, isoform 1 and isoform 2 are broadly expressed. Isoform 3 seems specific for skeletal muscle (at protein level).

It localises to the nucleus. It is found in the nucleolus. Its subcellular location is the chromosome. It carries out the reaction L-seryl-[protein] + ATP = O-phospho-L-seryl-[protein] + ADP + H(+). It catalyses the reaction L-threonyl-[protein] + ATP = O-phospho-L-threonyl-[protein] + ADP + H(+). The catalysed reaction is L-tyrosyl-[protein] + ATP = O-phospho-L-tyrosyl-[protein] + ADP + H(+). Inhibited by RANBP9. Dual-specificity kinase which possesses both serine/threonine and tyrosine kinase activities. Plays an essential role in ribosomal DNA (rDNA) double-strand break repair and rDNA copy number maintenance. During DNA damage, mediates transcription silencing in part via phosphorylating and enforcing DSB accumulation of the histone methyltransferase EHMT2. Enhances the transcriptional activity of TCF1/HNF1A and FOXO1. Inhibits epithelial cell migration. Mediates colon carcinoma cell survival in mitogen-poor environments. Inhibits the SHH and WNT1 pathways, thereby enhancing adipogenesis. In addition, promotes expression of the gluconeogenic enzyme glucose-6-phosphatase catalytic subunit 1 (G6PC1). This chain is Dual specificity tyrosine-phosphorylation-regulated kinase 1B (Dyrk1b), found in Mus musculus (Mouse).